A 142-amino-acid chain; its full sequence is Large ribosomal subunit protein bL17 (142 aa).

Belongs to the bacterial ribosomal protein bL17 family. In terms of assembly, part of the 50S ribosomal subunit. Contacts protein L32.

The chain is Large ribosomal subunit protein bL17 from Chlamydia pneumoniae (Chlamydophila pneumoniae).